The sequence spans 239 residues: Sugar fermentation stimulation protein homolog (239 aa).

Belongs to the SfsA family.

The sequence is that of Sugar fermentation stimulation protein homolog from Rhizobium meliloti (strain 1021) (Ensifer meliloti).